Here is an 80-residue protein sequence, read N- to C-terminus: Exodeoxyribonuclease 7 small subunit (80 aa).

This sequence belongs to the XseB family. In terms of assembly, heterooligomer composed of large and small subunits.

The protein resides in the cytoplasm. The catalysed reaction is Exonucleolytic cleavage in either 5'- to 3'- or 3'- to 5'-direction to yield nucleoside 5'-phosphates.. Functionally, bidirectionally degrades single-stranded DNA into large acid-insoluble oligonucleotides, which are then degraded further into small acid-soluble oligonucleotides. The polypeptide is Exodeoxyribonuclease 7 small subunit (Escherichia coli O139:H28 (strain E24377A / ETEC)).